The primary structure comprises 55 residues: Large ribosomal subunit protein bL33 (55 aa).

Belongs to the bacterial ribosomal protein bL33 family.

The polypeptide is Large ribosomal subunit protein bL33 (Kocuria rhizophila (strain ATCC 9341 / DSM 348 / NBRC 103217 / DC2201)).